A 122-amino-acid polypeptide reads, in one-letter code: Small ribosomal subunit protein bS6 (122 aa).

It belongs to the bacterial ribosomal protein bS6 family.

Binds together with bS18 to 16S ribosomal RNA. The polypeptide is Small ribosomal subunit protein bS6 (Neisseria meningitidis serogroup C (strain 053442)).